A 504-amino-acid chain; its full sequence is Probable cytosol aminopeptidase (504 aa).

Mn(2+)-binding residues include Lys263 and Asp268. Lys275 is a catalytic residue. Asp286, Asp345, and Glu347 together coordinate Mn(2+). Residue Arg349 is part of the active site.

It belongs to the peptidase M17 family. Mn(2+) serves as cofactor.

It is found in the cytoplasm. It carries out the reaction Release of an N-terminal amino acid, Xaa-|-Yaa-, in which Xaa is preferably Leu, but may be other amino acids including Pro although not Arg or Lys, and Yaa may be Pro. Amino acid amides and methyl esters are also readily hydrolyzed, but rates on arylamides are exceedingly low.. The enzyme catalyses Release of an N-terminal amino acid, preferentially leucine, but not glutamic or aspartic acids.. Presumably involved in the processing and regular turnover of intracellular proteins. Catalyzes the removal of unsubstituted N-terminal amino acids from various peptides. This Sulfurihydrogenibium sp. (strain YO3AOP1) protein is Probable cytosol aminopeptidase.